The sequence spans 85 residues: Makatoxin-2 (85 aa).

The signal sequence occupies residues 1-19; it reads MNYLIVISFALLLMTSVES. In terms of domain architecture, LCN-type CS-alpha/beta spans 21–83; sequence RDAYIADSEN…VPIRIPGPCR (63 aa). Disulfide bonds link Cys31-Cys82, Cys35-Cys55, Cys41-Cys65, and Cys45-Cys67.

Belongs to the long (4 C-C) scorpion toxin superfamily. Sodium channel inhibitor family. Alpha subfamily. Expressed by the venom gland.

The protein resides in the secreted. This protein markedly relaxes the rat carbachol-precontracted anococcygeus muscle. This relaxation is inhibited by the inhibitor of nitric oxide (NO) synthase, N-nitro-L-arginine methyl ester (L-NAME), suggesting that the response induced by this protein is NO-mediated. This Olivierus martensii (Manchurian scorpion) protein is Makatoxin-2.